The primary structure comprises 536 residues: Lysosomal acid glucosylceramidase (536 aa).

Residues 1-39 (MEFSSPSREECPKPSGRVSIMAGSLTGLLLLQAVSWASG) form the signal peptide. Intrachain disulfides connect Cys-43–Cys-55 and Cys-57–Cys-62. N-linked (GlcNAc...) asparagine glycans are attached at residues Asn-58, Asn-98, and Asn-185. The active-site Proton donor is the Glu-274. N-linked (GlcNAc...) asparagine glycosylation is present at Asn-309. Catalysis depends on Glu-379, which acts as the Nucleophile. An N-linked (GlcNAc...) asparagine glycan is attached at Asn-501.

This sequence belongs to the glycosyl hydrolase 30 family. As to quaternary structure, interacts with saposin-C. Interacts with SCARB2. Interacts with TCP1. Interacts with GRN; this interaction prevents aggregation of GBA1-SCARB2 complex via interaction with HSPA1A upon stress.

It is found in the lysosome membrane. It carries out the reaction a beta-D-glucosyl-(1&lt;-&gt;1')-N-acylsphing-4-enine + H2O = an N-acylsphing-4-enine + D-glucose. The enzyme catalyses a beta-D-galactosyl-(1&lt;-&gt;1')-N-acylsphing-4-enine + H2O = an N-acylsphing-4-enine + D-galactose. It catalyses the reaction cholesteryl 3-beta-D-glucoside + H2O = cholesterol + D-glucose. The catalysed reaction is a beta-D-glucosyl-(1&lt;-&gt;1')-N-acylsphing-4-enine + cholesterol = cholesteryl 3-beta-D-glucoside + an N-acylsphing-4-enine. It carries out the reaction beta-D-glucosyl-N-(9Z-octadecenoyl)-sphing-4E-enine + cholesterol = N-(9Z-octadecenoyl)-sphing-4-enine + cholesteryl 3-beta-D-glucoside. The enzyme catalyses beta-D-glucosyl-N-octanoylsphing-4E-enine + cholesterol = N-octanoylsphing-4-enine + cholesteryl 3-beta-D-glucoside. It catalyses the reaction beta-D-glucosyl-N-dodecanoylsphing-4-enine + cholesterol = N-dodecanoylsphing-4-enine + cholesteryl 3-beta-D-glucoside. The catalysed reaction is beta-D-glucosyl-(1&lt;-&gt;1)-N-octadecanoylsphing-4-enine + cholesterol = N-octadecanoylsphing-4-enine + cholesteryl 3-beta-D-glucoside. It carries out the reaction beta-D-glucosyl-(1&lt;-&gt;1')-N-(15Z-tetracosenoyl)-sphing-4-enine + cholesterol = N-(15Z-tetracosenoyl)-sphing-4-enine + cholesteryl 3-beta-D-glucoside. The enzyme catalyses a beta-D-galactosyl-(1&lt;-&gt;1')-N-acylsphing-4-enine + cholesterol = cholesteryl 3-beta-D-galactoside + an N-acylsphing-4-enine. It catalyses the reaction 1-(beta-D-galactosyl)-N-dodecanoylsphing-4-enine + cholesterol = cholesteryl 3-beta-D-galactoside + N-dodecanoylsphing-4-enine. The catalysed reaction is a beta-D-xylosyl-(1&lt;-&gt;1')-N-acylsphing-4-enine + cholesterol = cholesteryl 3-beta-D-xyloside + an N-acylsphing-4-enine. It carries out the reaction beta-D-xylosyl-(1&lt;-&gt;1')-N-(9Z-octadecenoyl)-sphing-4-enine + cholesterol = cholesteryl 3-beta-D-xyloside + N-(9Z-octadecenoyl)-sphing-4-enine. It functions in the pathway steroid metabolism; cholesterol metabolism. It participates in sphingolipid metabolism. Its function is as follows. Glucosylceramidase that catalyzes, within the lysosomal compartment, the hydrolysis of glucosylceramides/GlcCers (such as beta-D-glucosyl-(1&lt;-&gt;1')-N-acylsphing-4-enine) into free ceramides (such as N-acylsphing-4-enine) and glucose. Plays a central role in the degradation of complex lipids and the turnover of cellular membranes. Through the production of ceramides, participates in the PKC-activated salvage pathway of ceramide formation. Catalyzes the glucosylation of cholesterol, through a transglucosylation reaction where glucose is transferred from GlcCer to cholesterol. GlcCer containing mono-unsaturated fatty acids (such as beta-D-glucosyl-N-(9Z-octadecenoyl)-sphing-4-enine) are preferred as glucose donors for cholesterol glucosylation when compared with GlcCer containing same chain length of saturated fatty acids (such as beta-D-glucosyl-N-octadecanoyl-sphing-4-enine). Under specific conditions, may alternatively catalyze the reverse reaction, transferring glucose from cholesteryl 3-beta-D-glucoside to ceramide. Can also hydrolyze cholesteryl 3-beta-D-glucoside producing glucose and cholesterol. Catalyzes the hydrolysis of galactosylceramides/GalCers (such as beta-D-galactosyl-(1&lt;-&gt;1')-N-acylsphing-4-enine), as well as the transfer of galactose between GalCers and cholesterol in vitro, but with lower activity than with GlcCers. Contrary to GlcCer and GalCer, xylosylceramide/XylCer (such as beta-D-xyosyl-(1&lt;-&gt;1')-N-acylsphing-4-enine) is not a good substrate for hydrolysis, however it is a good xylose donor for transxylosylation activity to form cholesteryl 3-beta-D-xyloside. The chain is Lysosomal acid glucosylceramidase (GBA1) from Pan troglodytes (Chimpanzee).